Here is a 173-residue protein sequence, read N- to C-terminus: Adenine phosphoribosyltransferase (173 aa).

Belongs to the purine/pyrimidine phosphoribosyltransferase family. As to quaternary structure, homodimer.

Its subcellular location is the cytoplasm. The enzyme catalyses AMP + diphosphate = 5-phospho-alpha-D-ribose 1-diphosphate + adenine. The protein operates within purine metabolism; AMP biosynthesis via salvage pathway; AMP from adenine: step 1/1. Functionally, catalyzes a salvage reaction resulting in the formation of AMP, that is energically less costly than de novo synthesis. This chain is Adenine phosphoribosyltransferase, found in Solibacter usitatus (strain Ellin6076).